Here is a 236-residue protein sequence, read N- to C-terminus: Ribose-5-phosphate isomerase A 2 (236 aa).

Residues serine 31–threonine 34, aspartate 86–aspartate 89, and lysine 99–glycine 102 each bind substrate. Glutamate 108 acts as the Proton acceptor in catalysis. Residue lysine 126 participates in substrate binding.

The protein belongs to the ribose 5-phosphate isomerase family. In terms of assembly, homodimer.

The catalysed reaction is aldehydo-D-ribose 5-phosphate = D-ribulose 5-phosphate. It functions in the pathway carbohydrate degradation; pentose phosphate pathway; D-ribose 5-phosphate from D-ribulose 5-phosphate (non-oxidative stage): step 1/1. Functionally, catalyzes the reversible conversion of ribose-5-phosphate to ribulose 5-phosphate. This is Ribose-5-phosphate isomerase A 2 from Yersinia pestis.